Consider the following 481-residue polypeptide: Acyl-CoA ligase cnsG (481 aa).

Residues 3–11 (SPQLPPSMK) carry the PTS2-type peroxisomal targeting signal motif. Residues 124–132 (KSGTTGNPK), 263–268 (NGYGMT), aspartate 353, and arginine 368 contribute to the ATP site. Threonine 268 is a substrate binding site. CoA contacts are provided by residues 376 to 378 (GGL) and 446 to 448 (AIF). Residue lysine 466 coordinates ATP.

It belongs to the ATP-dependent AMP-binding enzyme family.

Its pathway is alkaloid biosynthesis. Functionally, acyl-CoA ligase; part of the gene cluster that mediates the biosynthesis of communesins, a prominent class of indole alkaloids with great potential as pharmaceuticals. Communesins are biosynthesized by the coupling of tryptamine and aurantioclavine, two building blocks derived from L-tryptophan. The L-tryptophan decarboxylase cnsB converts L-tryptophan to tryptamine, whereas the tryptophan dimethylallyltransferase cnsF converts L-tryptophan to 4-dimethylallyl tryptophan which is further transformed to aurantioclavine by the aurantioclavine synthase cnsA, probably aided by the catalase cnsD. The cytochrome P450 monooxygenase cnsC catalyzes the heterodimeric coupling between the two different indole moieties, tryptamine and aurantioclavine, to construct vicinal quaternary stereocenters and yield the heptacyclic communesin scaffold. The O-methyltransferase cnsE then methylates the communesin scaffold to produce communesin K, the simplest characterized communesin that contains the heptacyclic core. The dioxygenase cnsJ converts communesin K into communesin I. Acylation to introduce the hexadienyl group at position N16 of communesin I by the acyltransferase cnsK leads to the production of communesin B. The hexadienyl group is produced by the highly reducing polyketide synthase cnsI, before being hydrolytically removed from cnsI by the serine hydrolase cnsH, converted into hexadienyl-CoA by the CoA ligase cnsG, and then transferred to communesin I by cnsK. Surprisingly, cnsK may also be a promiscuous acyltransferase that can tolerate a range of acyl groups, including acetyl-, propionyl-, and butyryl-CoA, which lead to communesins A, G and H respectively. The roles of the alpha-ketoglutarate-dependent dioxygenases cnsM and cnsP have still to be determined. This chain is Acyl-CoA ligase cnsG, found in Penicillium expansum (Blue mold rot fungus).